We begin with the raw amino-acid sequence, 463 residues long: ATP-dependent protease ATPase subunit HslU (463 aa).

ATP is bound by residues valine 19, 61–66 (GVGKTE), aspartate 277, glutamate 341, and arginine 413.

It belongs to the ClpX chaperone family. HslU subfamily. A double ring-shaped homohexamer of HslV is capped on each side by a ring-shaped HslU homohexamer. The assembly of the HslU/HslV complex is dependent on binding of ATP.

It localises to the cytoplasm. Functionally, ATPase subunit of a proteasome-like degradation complex; this subunit has chaperone activity. The binding of ATP and its subsequent hydrolysis by HslU are essential for unfolding of protein substrates subsequently hydrolyzed by HslV. HslU recognizes the N-terminal part of its protein substrates and unfolds these before they are guided to HslV for hydrolysis. This chain is ATP-dependent protease ATPase subunit HslU, found in Shouchella clausii (strain KSM-K16) (Alkalihalobacillus clausii).